Here is a 152-residue protein sequence, read N- to C-terminus: Erythema protein SVEP (152 aa).

A signal peptide spans 1-18 (MSITQSFFVLTLAIFGAA).

Salivary gland (at protein level).

It localises to the secreted. Salivary vasoactive peptide; induces vasodilatation in bioassay with rabbit aortic rings. The protein is Erythema protein SVEP of Simulium vittatum (Striped black fly).